A 320-amino-acid polypeptide reads, in one-letter code: Probable movement protein (320 aa).

Catalysis depends on residues H144, D171, and S199. Disordered stretches follow at residues R251–R270 and E286–P320.

This sequence belongs to the tobamoviruses movement protein family.

May play a role in virus cell to cell movement by increasing the size exclusion limit of plasmodesmata and forming a complex with viral RNA to assist its movement. May also have a papain-like protease activity and cleave the genome polyprotein. In Malus sylvestris (European crab apple), this protein is Probable movement protein.